The following is a 315-amino-acid chain: THO complex subunit 3 (315 aa).

WD repeat units lie at residues 18 to 57 (GHKK…HSKA), 64 to 104 (GHTD…CTQQ), 106 to 145 (ELSG…PLHR), 189 to 228 (AHTA…CLRT), 231 to 270 (KLEW…TVHQ), and 272 to 311 (PCRA…RIFG).

This sequence belongs to the THOC3 family. Component of the THO complex, which is composed of THO1, THO2, THO3, THO5, THO6 and THO7.

The protein resides in the nucleus. Acts as a component of the THO subcomplex of the TREX complex which is thought to couple mRNA transcription, processing and nuclear export. Contributes to the integrity of the endogenous trans-acting small interfering RNA (ta-siRNA) pathway. May process or transport a long RNA molecule so that it can be a template for secondary siRNA production. May participate in the trafficking of siRNA precursors to the ARGONAUTE catalytic center. Required for the generation of functional messenger ribonucleoproteins (mRNPs). The sequence is that of THO complex subunit 3 (THO3) from Arabidopsis thaliana (Mouse-ear cress).